A 212-amino-acid polypeptide reads, in one-letter code: Thymidylate kinase (212 aa).

11-18 (GPEGAGKT) contacts ATP.

This sequence belongs to the thymidylate kinase family.

The catalysed reaction is dTMP + ATP = dTDP + ADP. Its function is as follows. Phosphorylation of dTMP to form dTDP in both de novo and salvage pathways of dTTP synthesis. This is Thymidylate kinase from Streptococcus pneumoniae serotype 19F (strain G54).